Consider the following 98-residue polypeptide: uncharacterized protein (98 aa).

The interval 58-98 (ARFPVEDTAGGLLRTGGHRPQISDEEVSKRHHEQSHGQEDH) is disordered.

This is an uncharacterized protein from Saccharomyces cerevisiae (strain ATCC 204508 / S288c) (Baker's yeast).